The following is a 177-amino-acid chain: Adenine phosphoribosyltransferase (177 aa).

This sequence belongs to the purine/pyrimidine phosphoribosyltransferase family. In terms of assembly, homodimer.

It localises to the cytoplasm. The enzyme catalyses AMP + diphosphate = 5-phospho-alpha-D-ribose 1-diphosphate + adenine. It functions in the pathway purine metabolism; AMP biosynthesis via salvage pathway; AMP from adenine: step 1/1. Catalyzes a salvage reaction resulting in the formation of AMP, that is energically less costly than de novo synthesis. The chain is Adenine phosphoribosyltransferase from Leptospira interrogans serogroup Icterohaemorrhagiae serovar copenhageni (strain Fiocruz L1-130).